A 1191-amino-acid polypeptide reads, in one-letter code: DNA-directed RNA polymerase subunit beta (1191 aa).

The disordered stretch occupies residues 1164–1191 (EEEDLQPADALNIAPQPDTEEEPVESFE). The span at 1181-1191 (DTEEEPVESFE) shows a compositional bias: acidic residues.

The protein belongs to the RNA polymerase beta chain family. The RNAP catalytic core consists of 2 alpha, 1 beta, 1 beta' and 1 omega subunit. When a sigma factor is associated with the core the holoenzyme is formed, which can initiate transcription.

The catalysed reaction is RNA(n) + a ribonucleoside 5'-triphosphate = RNA(n+1) + diphosphate. DNA-dependent RNA polymerase catalyzes the transcription of DNA into RNA using the four ribonucleoside triphosphates as substrates. This is DNA-directed RNA polymerase subunit beta from Lysinibacillus sphaericus (strain C3-41).